The primary structure comprises 118 residues: Large ribosomal subunit protein bL19 (118 aa).

This sequence belongs to the bacterial ribosomal protein bL19 family.

This protein is located at the 30S-50S ribosomal subunit interface and may play a role in the structure and function of the aminoacyl-tRNA binding site. The protein is Large ribosomal subunit protein bL19 of Salinispora tropica (strain ATCC BAA-916 / DSM 44818 / JCM 13857 / NBRC 105044 / CNB-440).